The following is a 485-amino-acid chain: Cobyric acid synthase (485 aa).

Positions 248–435 (VLKVVVPVLP…LHGLFESPDA (188 aa)) constitute a GATase cobBQ-type domain. Cys329 functions as the Nucleophile in the catalytic mechanism. The active site involves His427.

It belongs to the CobB/CobQ family. CobQ subfamily.

It functions in the pathway cofactor biosynthesis; adenosylcobalamin biosynthesis. Its function is as follows. Catalyzes amidations at positions B, D, E, and G on adenosylcobyrinic A,C-diamide. NH(2) groups are provided by glutamine, and one molecule of ATP is hydrogenolyzed for each amidation. The chain is Cobyric acid synthase from Stutzerimonas stutzeri (strain A1501) (Pseudomonas stutzeri).